Here is a 193-residue protein sequence, read N- to C-terminus: MNFLAHLHLAHLADSSLSGNLLADFVRGNPTQAYPTDVVDGIFMHRRIDVLTDNLPEVKEAKEWFRPETRRVAPITLDVMWDHFLSRHWAQLSPEMPLPEFVRYAHSQVAMILPDSPPRFVNLNEYLWSERWLERYREMDFIQRVLNGMASRRPRLDALRDSWQDLDTHYDALESRFWQFYPRMMVQAKNKQL.

It belongs to the AcpH family.

The catalysed reaction is holo-[ACP] + H2O = apo-[ACP] + (R)-4'-phosphopantetheine + H(+). Its function is as follows. Converts holo-ACP to apo-ACP by hydrolytic cleavage of the phosphopantetheine prosthetic group from ACP. This chain is Acyl carrier protein phosphodiesterase, found in Enterobacter sp. (strain 638).